We begin with the raw amino-acid sequence, 86 residues long: Putative membrane protein insertion efficiency factor (86 aa).

The segment at 64–86 (GVDPVPKKSSSKTSTTACGCGHS) is disordered. Residues 70 to 79 (KKSSSKTSTT) are compositionally biased toward low complexity.

The protein belongs to the UPF0161 family.

The protein localises to the cell inner membrane. Functionally, could be involved in insertion of integral membrane proteins into the membrane. The chain is Putative membrane protein insertion efficiency factor from Janthinobacterium sp. (strain Marseille) (Minibacterium massiliensis).